The primary structure comprises 178 residues: Cytochrome b6-f complex iron-sulfur subunit 1 (178 aa).

Residues Leu17 to Ala36 traverse the membrane as a helical segment. Positions Gly61–Ile161 constitute a Rieske domain. Cys107, His109, Cys125, and His128 together coordinate [2Fe-2S] cluster. Cys112 and Cys127 are joined by a disulfide.

This sequence belongs to the Rieske iron-sulfur protein family. The 4 large subunits of the cytochrome b6-f complex are cytochrome b6, subunit IV (17 kDa polypeptide, PetD), cytochrome f and the Rieske protein, while the 4 small subunits are PetG, PetL, PetM and PetN. The complex functions as a dimer. Requires [2Fe-2S] cluster as cofactor.

The protein localises to the cellular thylakoid membrane. The enzyme catalyses 2 oxidized [plastocyanin] + a plastoquinol + 2 H(+)(in) = 2 reduced [plastocyanin] + a plastoquinone + 4 H(+)(out). In terms of biological role, component of the cytochrome b6-f complex, which mediates electron transfer between photosystem II (PSII) and photosystem I (PSI), cyclic electron flow around PSI, and state transitions. The polypeptide is Cytochrome b6-f complex iron-sulfur subunit 1 (Synechocystis sp. (strain ATCC 27184 / PCC 6803 / Kazusa)).